The primary structure comprises 149 residues: Protein-export protein SecB 2 (149 aa).

It belongs to the SecB family. In terms of assembly, homotetramer, a dimer of dimers. One homotetramer interacts with 1 SecA dimer.

It localises to the cytoplasm. Its function is as follows. One of the proteins required for the normal export of preproteins out of the cell cytoplasm. It is a molecular chaperone that binds to a subset of precursor proteins, maintaining them in a translocation-competent state. It also specifically binds to its receptor SecA. This is Protein-export protein SecB 2 from Francisella tularensis subsp. tularensis (strain FSC 198).